Here is a 226-residue protein sequence, read N- to C-terminus: ATP synthase subunit a (226 aa).

A run of 6 helical transmembrane segments spans residues 17 to 37 (FSYFFHIGLVALIAVIVAMMA), 79 to 99 (LVATLGIIVFFSNIIGIIPGF), 105 to 125 (SLNLTLSLAIIVFVYYHFEGI), 134 to 154 (FAHFMGPIKLLAPLMFPIEIV), 176 to 196 (LFLMVILALVPYIAPLPAYVL), and 199 to 219 (FMAFLQAFIFMILTYVYLAGA).

The protein belongs to the ATPase A chain family. In terms of assembly, F-type ATPases have 2 components, CF(1) - the catalytic core - and CF(0) - the membrane proton channel. CF(1) has five subunits: alpha(3), beta(3), gamma(1), delta(1), epsilon(1). CF(0) has three main subunits: a(1), b(2) and c(9-12). The alpha and beta chains form an alternating ring which encloses part of the gamma chain. CF(1) is attached to CF(0) by a central stalk formed by the gamma and epsilon chains, while a peripheral stalk is formed by the delta and b chains.

The protein resides in the cell inner membrane. Functionally, key component of the proton channel; it plays a direct role in the translocation of protons across the membrane. This is ATP synthase subunit a from Campylobacter jejuni subsp. jejuni serotype O:6 (strain 81116 / NCTC 11828).